The sequence spans 29 residues: Dermaseptin-9TR (29 aa).

Expressed by the skin glands.

It is found in the secreted. Functionally, has antimicrobial activity. The protein is Dermaseptin-9TR of Phyllomedusa trinitatis (Trinidad leaf frog).